Here is a 640-residue protein sequence, read N- to C-terminus: Uromodulin (640 aa).

Positions 1–24 (MGQPSLTWMLMVVVASWFITTAAT) are cleaved as a signal peptide. One can recognise an EGF-like 1 domain in the interval 28–64 (EARWCSECHSNATCTEDEAVTTCTCQEGFTGDGLTCV). 21 cysteine pairs are disulfide-bonded: Cys32/Cys41, Cys35/Cys50, Cys52/Cys63, Cys69/Cys83, Cys77/Cys92, Cys94/Cys106, Cys112/Cys126, Cys120/Cys135, Cys137/Cys148, Cys150/Cys161, Cys155/Cys170, Cys174/Cys267, Cys195/Cys282, Cys217/Cys255, Cys223/Cys287, Cys248/Cys256, Cys297/Cys306, Cys300/Cys315, Cys317/Cys347, Cys335/Cys425, and Cys366/Cys389. An N-linked (GlcNAc...) asparagine glycan is attached at Asn38. The 43-residue stretch at 65–107 (DLDECAIPGAHNCSANSSCVNTPGSFSCVCPEGFRLSPGLGCT) folds into the EGF-like 2; calcium-binding domain. Residues Asn76 and Asn80 are each glycosylated (N-linked (GlcNAc...) asparagine). Residues 108-149 (DVDECAEPGLSHCHALATCVNVVGSYLCVCPAGYRGDGWHCE) enclose the EGF-like 3; calcium-binding domain. The interval 150–171 (CSPGSCGPGLDCVPEGDALVCA) is beta hairpin. Residues 172-291 (DPCQAHRTLD…CHLAYCTDPS (120 aa)) are D10C. The N-linked (GlcNAc...) (complex) asparagine glycan is linked to Asn232. Asn275 carries N-linked (GlcNAc...) (high mannose) asparagine glycosylation. The EGF-like 4 domain maps to 292–323 (SVEGTCEECSIDEDCKSNNGRWHCQCKQDFNI). Asn322 is a glycosylation site (N-linked (GlcNAc...) (complex) asparagine). Residues 334-429 (ECGANDMKVS…KINFACSYPL (96 aa)) are ZP-N. The region spanning 334-589 (ECGANDMKVS…PTCSGTRFRS (256 aa)) is the ZP domain. An N-linked (GlcNAc...) (complex) asparagine glycan is attached at Asn396. Residues 430-453 (DMKVSLKTALQPMVSALNIRVGGT) are flexible ZP-N/ZP-C linker; important for secretion and polymerization into filaments. An internal hydrophobic patch (IHP) region spans residues 454–465 (GMFTVRMALFQT). The interval 454–589 (GMFTVRMALF…PTCSGTRFRS (136 aa)) is ZP-C. 3 cysteine pairs are disulfide-bonded: Cys506-Cys566, Cys527-Cys582, and Cys571-Cys578. A glycan (N-linked (GlcNAc...) (complex) asparagine; alternate) is linked at Asn513. Asn513 is a glycosylation site (N-linked (GlcNAc...) (high mannose) asparagine; alternate). An essential for cleavage by HPN region spans residues 586 to 589 (RFRS). The external hydrophobic patch (EHP); regulates polymerization into filaments stretch occupies residues 598-606 (VLNLGPITR). Ser614 is lipidated: GPI-anchor amidated serine. Positions 615 to 640 (RAFSSLGLLKVWLPLLLSATLTLTFQ) are cleaved as a propeptide — removed in mature form.

Homodimer that then polymerizes into long filaments. The filaments can additionally assemble laterally to form a sheet. The filaments consist of a zigzag-shaped backbone with laterally protruding arms which interact with bacterial adhesin fimH. Two fimH molecules can bind to a single UMOD monomer. Post-translationally, N-glycosylated. N-glycan heterogeneity at Asn-232: Hex7HexNAc6 (major) and dHex1Hex7HexNAc6 (minor); at Asn-322: dHex1Hex6HexNAc5 (minor), dHex1Hex7HexNAc6 (major) and dHex1Hex8HexNAc7 (minor); at Asn-396: Hex6HexNAc5 (major), dHex1Hex6HexNAc5 (minor) and Hex7HexNAc6 (minor). Glycosylated Asn-232 interacts with E.coli adhesin fimH. Other complex glycosylation sites may serve as binding sites for proteins from other bacteria inclduding K.pneumoniae, P.aeruginosa and S.mitis. In terms of processing, proteolytically cleaved at a conserved C-terminal proteolytic cleavage site to generate the secreted form found in urine. This cleavage is catalyzed by HPN. In terms of tissue distribution, expressed in the tubular cells of the kidney. Most abundant protein in normal urine (at protein level). Synthesized exclusively in the kidney. Expressed exclusively by epithelial cells of the thick ascending limb of Henle's loop (TALH) and of distal convoluted tubule lumen.

The protein localises to the apical cell membrane. It is found in the basolateral cell membrane. The protein resides in the cell projection. Its subcellular location is the cilium membrane. It localises to the secreted. In terms of biological role, functions in biogenesis and organization of the apical membrane of epithelial cells of the thick ascending limb of Henle's loop (TALH), where it promotes formation of complex filamentous gel-like structure that may play a role in the water barrier permeability. May serve as a receptor for binding and endocytosis of cytokines (IL-1, IL-2) and TNF. Facilitates neutrophil migration across renal epithelia. Functionally, in the urine, may contribute to colloid osmotic pressure, retards passage of positively charged electrolytes, and inhibits formation of liquid containing supersaturated salts and subsequent formation of salt crystals. Protects against urinary tract infections by binding to type 1 fimbriated E.coli. Binds to bacterial adhesin fimH which mediates the stable formation of bacterial aggregates, prevents the binding of E.coli to uroplakins UPK1A and UPK1B which act as urothelial receptors for type I fimbriae, and allows for pathogen clearance through micturation. Also promotes aggregation of other bacteria including K.pneumoniae, P.aeruginosa and S.mitis and so may also protect against other uropathogens. The protein is Uromodulin (UMOD) of Homo sapiens (Human).